The following is a 695-amino-acid chain: MKMKSQATMICCLVFFLSTECSHYRSKIHLKAGDKLQSPEGKPKTGRIQEKCEGPCISSSNCSQPCAKDFHGEIGFTCNQKKWQKSAETCTSLSVEKLFKDSTGASRLSVAAPSIPLHILDFRAPETIESVAQGIRKNCPFDYACITDMVKSSETTSGNIAFIVELLKNISTDLSDNVTREKMKSYSEVANHILDTAAISNWAFIPNKNASSDLLQSVNLFARQLHIHNNSENIVNELFIQTKGFHINHNTSEKSLNFSMSMNNTTEDILGMVQIPRQELRKLWPNASQAISIAFPTLGAILREAHLQNVSLPRQVNGLVLSVVLPERLQEIILTFEKINKTRNARAQCVGWHSKKRRWDEKACQMMLDIRNEVKCRCNYTSVVMSFSILMSSKSMTDKVLDYITCIGLSVSILSLVLCLIIEATVWSRVVVTEISYMRHVCIVNIAVSLLTANVWFIIGSHFNIKAQDYNMCVAVTFFSHFFYLSLFFWMLFKALLIIYGILVIFRRMMKSRMMVIGFAIGYGCPLIIAVTTVAITEPEKGYMRPEACWLNWDNTKALLAFAIPAFVIVAVNLIVVLVVAVNTQRPSIGSSKSQDVVIIMRISKNVAILTPLLGLTWGFGIATLIEGTSLTFHIIFALLNAFQGFFILLFGTIMDHKIRDALRMRMSSLKGKSRAAENASLGPTNGSKLMNRQG.

A signal peptide spans 1–21 (MKMKSQATMICCLVFFLSTEC). The Extracellular segment spans residues 22 to 406 (SHYRSKIHLK…TDKVLDYITC (385 aa)). Residues Asn61, Asn169, Asn177, Asn209, Asn229, Asn250, Asn257, Asn263, Asn264, Asn286, Asn309, and Asn340 are each glycosylated (N-linked (GlcNAc...) asparagine). The region spanning 249–397 (HNTSEKSLNF…SILMSSKSMT (149 aa)) is the GAIN-B domain. Intrachain disulfides connect Cys349–Cys376 and Cys364–Cys378. Residues 349-397 (CVGWHSKKRRWDEKACQMMLDIRNEVKCRCNYTSVVMSFSILMSSKSMT) form a GPS region. N-linked (GlcNAc...) asparagine glycosylation is present at Asn379. Residues 407 to 427 (IGLSVSILSLVLCLIIEATVW) form a helical membrane-spanning segment. Over 428-440 (SRVVVTEISYMRH) the chain is Cytoplasmic. Residues 441 to 461 (VCIVNIAVSLLTANVWFIIGS) form a helical membrane-spanning segment. The Extracellular portion of the chain corresponds to 462 to 485 (HFNIKAQDYNMCVAVTFFSHFFYL). A helical transmembrane segment spans residues 486-506 (SLFFWMLFKALLIIYGILVIF). The Cytoplasmic segment spans residues 507–515 (RRMMKSRMM). The helical transmembrane segment at 516 to 536 (VIGFAIGYGCPLIIAVTTVAI) threads the bilayer. The Extracellular portion of the chain corresponds to 537-561 (TEPEKGYMRPEACWLNWDNTKALLA). The chain crosses the membrane as a helical span at residues 562-582 (FAIPAFVIVAVNLIVVLVVAV). Topologically, residues 583 to 606 (NTQRPSIGSSKSQDVVIIMRISKN) are cytoplasmic. The chain crosses the membrane as a helical span at residues 607–627 (VAILTPLLGLTWGFGIATLIE). At 628–634 (GTSLTFH) the chain is on the extracellular side. A helical transmembrane segment spans residues 635–655 (IIFALLNAFQGFFILLFGTIM). Over 656-695 (DHKIRDALRMRMSSLKGKSRAAENASLGPTNGSKLMNRQG) the chain is Cytoplasmic. Residues 674–695 (SRAAENASLGPTNGSKLMNRQG) are disordered. A compositionally biased stretch (polar residues) spans 682 to 695 (LGPTNGSKLMNRQG).

This sequence belongs to the G-protein coupled receptor 2 family. Adhesion G-protein coupled receptor (ADGR) subfamily.

The protein resides in the membrane. Orphan receptor. This is Adhesion G protein-coupled receptor F4 (ADGRF4) from Homo sapiens (Human).